The following is a 928-amino-acid chain: Protein NETWORKED 2B (928 aa).

One can recognise an NAB domain in the interval 10-90; sequence YSWWWASHIR…ERYDHLSTEL (81 aa). The disordered stretch occupies residues 108–144; sequence PLVDDDDDDDDDNPKKPPKHLHLIPSGTNIPQVPEVP. Over residues 110–119 the composition is skewed to acidic residues; it reads VDDDDDDDDD. 2 coiled-coil regions span residues 207-309 and 360-445; these read SYEQ…AKKA and ALLK…VKMD. Disordered stretches follow at residues 447-472 and 489-529; these read DVEG…SISN and KQSR…EERR. The span at 457–468 shows a compositional bias: acidic residues; sequence DIQEEDTVEDSD. Over residues 489-506 the composition is skewed to basic and acidic residues; it reads KQSRDQESMQEEKSETRD. A coiled-coil region spans residues 547–574; that stretch reads LLDEYSSVLRDYREVKRKLSEVEKKNRD. Residues 620–651 form a disordered region; that stretch reads AESVSISHSSNSSFSMPPLPQRGDLKRASEQE. The span at 622–634 shows a compositional bias: low complexity; the sequence is SVSISHSSNSSFS. Positions 642–651 are enriched in basic and acidic residues; it reads GDLKRASEQE.

It belongs to the NET family.

In terms of biological role, plant-specific actin binding protein. May be part of a membrane-cytoskeletal adapter complex. In Arabidopsis thaliana (Mouse-ear cress), this protein is Protein NETWORKED 2B.